Reading from the N-terminus, the 83-residue chain is MLRNLLALRQIAQRTISTTSRRHFENKVPEKQKLFQEDNGMPVHLKGGASDALLYRATMALTLGGTAYAIYLLAMAAFPKKQN.

A mitochondrion-targeting transit peptide spans 1–23 (MLRNLLALRQIAQRTISTTSRRH). Topologically, residues 24-48 (FENKVPEKQKLFQEDNGMPVHLKGG) are mitochondrial matrix. N6-acetyllysine is present on lysine 33. A helical transmembrane segment spans residues 49-77 (ASDALLYRATMALTLGGTAYAIYLLAMAA). Residues 78-83 (FPKKQN) are Mitochondrial intermembrane-facing.

The protein belongs to the cytochrome c oxidase VIIa family. Component of the cytochrome c oxidase (complex IV, CIV), a multisubunit enzyme composed of 14 subunits. The complex is composed of a catalytic core of 3 subunits MT-CO1, MT-CO2 and MT-CO3, encoded in the mitochondrial DNA, and 11 supernumerary subunits COX4I, COX5A, COX5B, COX6A, COX6B, COX6C, COX7A, COX7B, COX7C, COX8 and NDUFA4, which are encoded in the nuclear genome. The complex exists as a monomer or a dimer and forms supercomplexes (SCs) in the inner mitochondrial membrane with NADH-ubiquinone oxidoreductase (complex I, CI) and ubiquinol-cytochrome c oxidoreductase (cytochrome b-c1 complex, complex III, CIII), resulting in different assemblies (supercomplex SCI(1)III(2)IV(1) and megacomplex MCI(2)III(2)IV(2)). Interacts with PET100.

The protein resides in the mitochondrion inner membrane. It functions in the pathway energy metabolism; oxidative phosphorylation. Component of the cytochrome c oxidase, the last enzyme in the mitochondrial electron transport chain which drives oxidative phosphorylation. The respiratory chain contains 3 multisubunit complexes succinate dehydrogenase (complex II, CII), ubiquinol-cytochrome c oxidoreductase (cytochrome b-c1 complex, complex III, CIII) and cytochrome c oxidase (complex IV, CIV), that cooperate to transfer electrons derived from NADH and succinate to molecular oxygen, creating an electrochemical gradient over the inner membrane that drives transmembrane transport and the ATP synthase. Cytochrome c oxidase is the component of the respiratory chain that catalyzes the reduction of oxygen to water. Electrons originating from reduced cytochrome c in the intermembrane space (IMS) are transferred via the dinuclear copper A center (CU(A)) of subunit 2 and heme A of subunit 1 to the active site in subunit 1, a binuclear center (BNC) formed by heme A3 and copper B (CU(B)). The BNC reduces molecular oxygen to 2 water molecules using 4 electrons from cytochrome c in the IMS and 4 protons from the mitochondrial matrix. This Mus musculus (Mouse) protein is Cytochrome c oxidase subunit 7A2, mitochondrial (Cox7a2).